A 376-amino-acid polypeptide reads, in one-letter code: 4-hydroxy-3-methylbut-2-en-1-yl diphosphate synthase (flavodoxin) (376 aa).

Cysteine 270, cysteine 273, cysteine 305, and glutamate 312 together coordinate [4Fe-4S] cluster.

The protein belongs to the IspG family. It depends on [4Fe-4S] cluster as a cofactor.

The enzyme catalyses (2E)-4-hydroxy-3-methylbut-2-enyl diphosphate + oxidized [flavodoxin] + H2O + 2 H(+) = 2-C-methyl-D-erythritol 2,4-cyclic diphosphate + reduced [flavodoxin]. It participates in isoprenoid biosynthesis; isopentenyl diphosphate biosynthesis via DXP pathway; isopentenyl diphosphate from 1-deoxy-D-xylulose 5-phosphate: step 5/6. Its function is as follows. Converts 2C-methyl-D-erythritol 2,4-cyclodiphosphate (ME-2,4cPP) into 1-hydroxy-2-methyl-2-(E)-butenyl 4-diphosphate. In Colwellia psychrerythraea (strain 34H / ATCC BAA-681) (Vibrio psychroerythus), this protein is 4-hydroxy-3-methylbut-2-en-1-yl diphosphate synthase (flavodoxin).